We begin with the raw amino-acid sequence, 232 residues long: Large ribosomal subunit protein uL1 (232 aa).

Belongs to the universal ribosomal protein uL1 family. In terms of assembly, part of the 50S ribosomal subunit.

Functionally, binds directly to 23S rRNA. The L1 stalk is quite mobile in the ribosome, and is involved in E site tRNA release. Its function is as follows. Protein L1 is also a translational repressor protein, it controls the translation of the L11 operon by binding to its mRNA. The protein is Large ribosomal subunit protein uL1 of Paraburkholderia phytofirmans (strain DSM 17436 / LMG 22146 / PsJN) (Burkholderia phytofirmans).